An 809-amino-acid polypeptide reads, in one-letter code: Penicillin-binding protein 1A (809 aa).

Residues 1 to 34 (MSDNTKTNSRNKSVKRTKKVKKKKKFGFFKKLFT) are Cytoplasmic-facing. Residues 35-55 (ILFCLFILLSVAASGVIFAIV) traverse the membrane as a helical; Signal-anchor for type II membrane protein segment. Topologically, residues 56–809 (KTSPNLDING…PNNNTTNTNK (754 aa)) are extracellular. Residues 74 to 251 (SQLYDDNNNP…PSAYYPFSQN (178 aa)) form a transglycosylase region. The active-site Proton donor; for transglycosylase activity is the Glu113. The segment at 381-664 (AAATLFDYHT…VAEIWGEIMK (284 aa)) is transpeptidase. The Acyl-ester intermediate; for transpeptidase activity role is filled by Ser422. The interval 694–809 (SPSNLSGDDS…PNNNTTNTNK (116 aa)) is disordered.

This sequence in the N-terminal section; belongs to the glycosyltransferase 51 family. In the C-terminal section; belongs to the transpeptidase family.

Its subcellular location is the cell membrane. The enzyme catalyses [GlcNAc-(1-&gt;4)-Mur2Ac(oyl-L-Ala-gamma-D-Glu-L-Lys-D-Ala-D-Ala)](n)-di-trans,octa-cis-undecaprenyl diphosphate + beta-D-GlcNAc-(1-&gt;4)-Mur2Ac(oyl-L-Ala-gamma-D-Glu-L-Lys-D-Ala-D-Ala)-di-trans,octa-cis-undecaprenyl diphosphate = [GlcNAc-(1-&gt;4)-Mur2Ac(oyl-L-Ala-gamma-D-Glu-L-Lys-D-Ala-D-Ala)](n+1)-di-trans,octa-cis-undecaprenyl diphosphate + di-trans,octa-cis-undecaprenyl diphosphate + H(+). It carries out the reaction Preferential cleavage: (Ac)2-L-Lys-D-Ala-|-D-Ala. Also transpeptidation of peptidyl-alanyl moieties that are N-acyl substituents of D-alanine.. It participates in cell wall biogenesis; peptidoglycan biosynthesis. Functionally, cell wall formation. Synthesis of cross-linked peptidoglycan from the lipid intermediates. The enzyme has a penicillin-insensitive transglycosylase N-terminal domain (formation of linear glycan strands) and a penicillin-sensitive transpeptidase C-terminal domain (cross-linking of the peptide subunits). This is Penicillin-binding protein 1A (pbpA) from Clostridium acetobutylicum (strain ATCC 824 / DSM 792 / JCM 1419 / IAM 19013 / LMG 5710 / NBRC 13948 / NRRL B-527 / VKM B-1787 / 2291 / W).